We begin with the raw amino-acid sequence, 360 residues long: Serine/threonine-protein kinase SAPK4 (360 aa).

Residues 4-260 enclose the Protein kinase domain; that stretch reads YEAVRDIGSG…MKEIKSHPWF (257 aa). ATP contacts are provided by residues 10–18 and Lys-33; that span reads IGSGNFGVA. The Proton acceptor role is filled by Asp-123. The disordered stretch occupies residues 303 to 360; it reads TMPKSSRTGYWSDAGSDEEEKEEEERPEENEEEEEDEYDKRVKEVHASGELRMSSLRI. The segment covering 317-339 has biased composition (acidic residues); it reads GSDEEEKEEEERPEENEEEEEDE. Residues 340 to 351 show a composition bias toward basic and acidic residues; that stretch reads YDKRVKEVHASG.

The protein belongs to the protein kinase superfamily. Ser/Thr protein kinase family. May be phosphorylated. Expressed in leaf blades, leaf sheaths and roots. Expressed in shoots and roots of young seedlings.

It catalyses the reaction L-seryl-[protein] + ATP = O-phospho-L-seryl-[protein] + ADP + H(+). The catalysed reaction is L-threonyl-[protein] + ATP = O-phospho-L-threonyl-[protein] + ADP + H(+). Activated by hyperosmotic stress. Its function is as follows. May play a role in signal transduction of hyperosmotic response. The polypeptide is Serine/threonine-protein kinase SAPK4 (SAPK4) (Oryza sativa subsp. japonica (Rice)).